A 512-amino-acid chain; its full sequence is Maturase K (512 aa).

It belongs to the intron maturase 2 family. MatK subfamily.

The protein localises to the plastid. The protein resides in the chloroplast. Usually encoded in the trnK tRNA gene intron. Probably assists in splicing its own and other chloroplast group II introns. This chain is Maturase K, found in Platanus occidentalis (Sycamore).